An 895-amino-acid polypeptide reads, in one-letter code: MASTVAGNSFVSQQHPGNLHSANLQSQSQGFRRQNSTSSVPSTASFDPPNGSIANTGSQKHHPMSSQQSQPPASQQSFSMSQTGSQPQPSQSSFRSYSDQNVPQQPQEASPIYTAVYSNVEVYEFEVNGVAVMKRIGDSKLNATQILKVAGVEKGKRTKILEKEIQTGEHEKVQGGYGKYQGTWIKYERALEVCRQYGVEELLRPLLEYNRNPDGSVSQANLNTPTKEQAMAAQRKKMYNSGADSRNNNGGGTFFKNISQTAHSAMTAISKARFDSPGPRGRNGPTRAPSFQRQLSTQSIDDFHGGNSQASNFAENFPPQDVNMAFSAGSEPQPGGLNGTEPPRKRQRMDMTPANSFGAYANNSQMQAYADAFPGSPTEPNDSFIYTQHAAANDTLLQQQHDQQTPLQPLPYEQSVEAENKRSMLMSIFMNDGMSEQARVDTLRQIHPRDLDMPIDSQCHTALHWAATLSRMTILRRLIEAGASPFRVNTSGETPLMRACIVTNSHDNDSMPAILDILGNTMEVRDSKERTVLHHIALTSAVSGRSAASRYYLQCLLGWVVRQGAANGGQLNSQTFNGGATVSQSQNATRLDLGRFMSEMLNAQDSAGDTALNIAARIGNRSIISQLLEVCASPHIANRSGLRPTDFGIGVDSDGAMKTKGDSGGDVENGDVGGSSQKSNESSNEIVTSITHLLTETSANFQEEIKNKQKNIDSLHATLRLTTTDVNDLRRKLDEAQARVKAQQLARQKVTNLQRAEERERYRLTQLEQTTGRRDIASANGWEAESNTLLATINATTNGEPDADAKLPSSALLRARIEAVKKQTESTRQSVVALKGRSREVEGRYRHLVALATKCRDEDVDSTMEGLLKAVESEKGELEIGRVRRFLGGVEGVIG.

The span at 1 to 45 shows a compositional bias: polar residues; the sequence is MASTVAGNSFVSQQHPGNLHSANLQSQSQGFRRQNSTSSVPSTAS. The disordered stretch occupies residues 1–107; it reads MASTVAGNSF…SDQNVPQQPQ (107 aa). Over residues 64–100 the composition is skewed to low complexity; it reads MSSQQSQPPASQQSFSMSQTGSQPQPSQSSFRSYSDQ. Residues 112-219 form the HTH APSES-type domain; it reads IYTAVYSNVE…NRNPDGSVSQ (108 aa). A DNA-binding region (H-T-H motif) is located at residues 143–164; the sequence is ATQILKVAGVEKGKRTKILEKE. 2 disordered regions span residues 272–293 and 323–358; these read ARFD…SFQR and NMAF…NSFG. ANK repeat units lie at residues 458 to 488 and 607 to 636; these read QCHT…PFRV and AGDT…SPHI. The tract at residues 653-684 is disordered; sequence SDGAMKTKGDSGGDVENGDVGGSSQKSNESSN. Residues 674–684 are compositionally biased toward polar residues; sequence GSSQKSNESSN. A coiled-coil region spans residues 698–759; it reads SANFQEEIKN…VTNLQRAEER (62 aa).

The protein localises to the nucleus. Its function is as follows. Transcription factor that plays a role downstream of the MCK1-MKK2-MPS1 cascade. Required for hyphal morphogenesis and pathogenicity. Is an important oxidative stress response regulator and plays a positive role in the regulation of extracellular peroxidases. This is Transcription factor SWI6 from Pyricularia oryzae (strain 70-15 / ATCC MYA-4617 / FGSC 8958) (Rice blast fungus).